Here is a 31-residue protein sequence, read N- to C-terminus: Basic phospholipase A2 13 (31 aa).

This sequence belongs to the phospholipase A2 family. Group I subfamily. Ca(2+) is required as a cofactor. Expressed by the venom gland.

It localises to the secreted. It catalyses the reaction a 1,2-diacyl-sn-glycero-3-phosphocholine + H2O = a 1-acyl-sn-glycero-3-phosphocholine + a fatty acid + H(+). Its function is as follows. Snake venom phospholipase A2 (PLA2) that inhibits neuromuscular transmission by blocking acetylcholine release from the nerve termini. PLA2 catalyzes the calcium-dependent hydrolysis of the 2-acyl groups in 3-sn-phosphoglycerides. The protein is Basic phospholipase A2 13 of Bungarus fasciatus (Banded krait).